Here is a 311-residue protein sequence, read N- to C-terminus: Methionyl-tRNA formyltransferase (311 aa).

Position 110-113 (110-113 (SLLP)) interacts with (6S)-5,6,7,8-tetrahydrofolate.

It belongs to the Fmt family.

The catalysed reaction is L-methionyl-tRNA(fMet) + (6R)-10-formyltetrahydrofolate = N-formyl-L-methionyl-tRNA(fMet) + (6S)-5,6,7,8-tetrahydrofolate + H(+). Its function is as follows. Attaches a formyl group to the free amino group of methionyl-tRNA(fMet). The formyl group appears to play a dual role in the initiator identity of N-formylmethionyl-tRNA by promoting its recognition by IF2 and preventing the misappropriation of this tRNA by the elongation apparatus. The sequence is that of Methionyl-tRNA formyltransferase from Streptococcus equi subsp. equi (strain 4047).